The primary structure comprises 413 residues: Divalent metal cation transporter MntH (413 aa).

Topologically, residues 1–19 (MTDNRVENSSGRAARKLRL) are cytoplasmic. Residues 20–39 (ALMGPAFIAAIGYIDPGNFA) traverse the membrane as a helical segment. Over 40–51 (TNIQAGASFGYQ) the chain is Periplasmic. Residues 52-71 (LLWVVVWANLMAMLIQILSA) form a helical membrane-spanning segment. The Cytoplasmic portion of the chain corresponds to 72 to 95 (KLGIATGKNLAEQIRDHYPRPVVW). A helical transmembrane segment spans residues 96-118 (FYWVQAEIIAMATDLAEFIGAAI). Residues 119 to 125 (GFKLILG) are Periplasmic-facing. Residues 126–145 (VSLLQGAVLTGIATFLILML) traverse the membrane as a helical segment. Residues 146–155 (QRRGQKPLEK) lie on the Cytoplasmic side of the membrane. A helical transmembrane segment spans residues 156-175 (VIGGLLLFVAAAYIVELFFS). The Periplasmic segment spans residues 176 to 196 (QPDMAQLGKGMVIPALPNPEA). Residues 197–220 (VFLAAGVLGATIMPHVIYLHSSLT) form a helical membrane-spanning segment. The Cytoplasmic portion of the chain corresponds to 221–238 (QHLHGGTRQQRYSATKWD). The helical transmembrane segment at 239–258 (VAIAMTIAGFVNLAMMATAA) threads the bilayer. At 259-276 (AAFHFSGHTGIADLDQAY) the chain is on the periplasmic side. Residues 277–297 (LTLEPLLSHAAATVFGLSLVA) form a helical membrane-spanning segment. The Cytoplasmic segment spans residues 298 to 327 (AGLSSTVVGTLAGQVVMQGFVRFHIPLWVR). The chain crosses the membrane as a helical span at residues 328–344 (RTITMLPSFIVILMGLD). Residues 345 to 350 (PTRILV) are Periplasmic-facing. Residues 351 to 370 (MSQVLLSFGIALALVPLLIF) form a helical membrane-spanning segment. Topologically, residues 371-387 (TSNATLMGELVNTRRVK) are cytoplasmic. A helical transmembrane segment spans residues 388 to 406 (QVGWIIVVLVVALNIWLLV). Residues 407–413 (GTVMGLS) lie on the Periplasmic side of the membrane.

The protein belongs to the NRAMP family.

The protein localises to the cell inner membrane. Its function is as follows. H(+)-stimulated, divalent metal cation uptake system. The chain is Divalent metal cation transporter MntH from Salmonella paratyphi C (strain RKS4594).